Here is a 232-residue protein sequence, read N- to C-terminus: Phosphatidylserine decarboxylase proenzyme (232 aa).

The active-site Schiff-base intermediate with substrate; via pyruvic acid is S190. Position 190 is a pyruvic acid (Ser); by autocatalysis (S190).

The protein belongs to the phosphatidylserine decarboxylase family. PSD-A subfamily. Heterodimer of a large membrane-associated beta subunit and a small pyruvoyl-containing alpha subunit. Pyruvate serves as cofactor. Post-translationally, is synthesized initially as an inactive proenzyme. Formation of the active enzyme involves a self-maturation process in which the active site pyruvoyl group is generated from an internal serine residue via an autocatalytic post-translational modification. Two non-identical subunits are generated from the proenzyme in this reaction, and the pyruvate is formed at the N-terminus of the alpha chain, which is derived from the carboxyl end of the proenzyme. The post-translation cleavage follows an unusual pathway, termed non-hydrolytic serinolysis, in which the side chain hydroxyl group of the serine supplies its oxygen atom to form the C-terminus of the beta chain, while the remainder of the serine residue undergoes an oxidative deamination to produce ammonia and the pyruvoyl prosthetic group on the alpha chain.

Its subcellular location is the cell membrane. It catalyses the reaction a 1,2-diacyl-sn-glycero-3-phospho-L-serine + H(+) = a 1,2-diacyl-sn-glycero-3-phosphoethanolamine + CO2. The protein operates within phospholipid metabolism; phosphatidylethanolamine biosynthesis; phosphatidylethanolamine from CDP-diacylglycerol: step 2/2. Catalyzes the formation of phosphatidylethanolamine (PtdEtn) from phosphatidylserine (PtdSer). The sequence is that of Phosphatidylserine decarboxylase proenzyme from Afipia carboxidovorans (strain ATCC 49405 / DSM 1227 / KCTC 32145 / OM5) (Oligotropha carboxidovorans).